A 282-amino-acid polypeptide reads, in one-letter code: S-formylglutathione hydrolase (282 aa).

Position 2 is an N-acetylalanine (Ala-2). At Lys-4 the chain carries N6-succinyllysine. Catalysis depends on charge relay system residues Ser-149, Asp-226, and His-260.

This sequence belongs to the esterase D family. Homodimer.

It is found in the cytoplasm. The protein resides in the cytoplasmic vesicle. The enzyme catalyses S-formylglutathione + H2O = formate + glutathione + H(+). Its function is as follows. Serine hydrolase involved in the detoxification of formaldehyde. The protein is S-formylglutathione hydrolase (ESD) of Bos taurus (Bovine).